Reading from the N-terminus, the 244-residue chain is Tubulin-folding cofactor B (244 aa).

Met-1 is modified (N-acetylmethionine). Position 65 is a phosphoserine; by PAK1 (Ser-65). Position 98 is a phosphotyrosine (Tyr-98). Ser-110 carries the post-translational modification Phosphoserine. A Phosphoserine; by PAK1 modification is found at Ser-128. The 43-residue stretch at 183–225 folds into the CAP-Gly domain; that stretch reads GLTDFKPGYWVGVRYDEPLGKNDGSVNGKRYFECQAKYGAFVK. N6-acetyllysine is present on Lys-219.

The protein belongs to the TBCB family. As to quaternary structure, supercomplex made of cofactors A to E. Cofactors A and D function by capturing and stabilizing tubulin in a quasi-native conformation. Cofactor E binds to the cofactor D-tubulin complex; interaction with cofactor C then causes the release of tubulin polypeptides that are committed to the native state. Cofactors B and E can form a heterodimer which binds to alpha-tubulin and enhances their ability to dissociate tubulin heterodimers. Interacts with GAN. Interacts with DCTN1. In terms of processing, phosphorylation by PAK1 is required for normal function. Post-translationally, ubiquitinated in the presence of GAN which targets it for degradation by the proteasome. In terms of tissue distribution, widely expressed with highest levels in brain. Broadly distributed throughout the neonate brain but restricted mainly to ependymary cells in the adult brain where it is concentrated in the cilia.

Its subcellular location is the cytoplasm. It is found in the cytoskeleton. Its function is as follows. Binds to alpha-tubulin folding intermediates after their interaction with cytosolic chaperonin in the pathway leading from newly synthesized tubulin to properly folded heterodimer. Involved in regulation of tubulin heterodimer dissociation. May function as a negative regulator of axonal growth. This Mus musculus (Mouse) protein is Tubulin-folding cofactor B (Tbcb).